We begin with the raw amino-acid sequence, 202 residues long: Indolepyruvate oxidoreductase subunit IorB (202 aa).

Heterodimer of the IorA and IorB subunits.

The enzyme catalyses indole-3-pyruvate + 2 oxidized [2Fe-2S]-[ferredoxin] + CoA = (indol-3-yl)acetyl-CoA + 2 reduced [2Fe-2S]-[ferredoxin] + CO2 + H(+). Its function is as follows. Catalyzes the ferredoxin-dependent oxidative decarboxylation of arylpyruvates. This chain is Indolepyruvate oxidoreductase subunit IorB (iorB), found in Thermococcus kodakarensis (strain ATCC BAA-918 / JCM 12380 / KOD1) (Pyrococcus kodakaraensis (strain KOD1)).